We begin with the raw amino-acid sequence, 236 residues long: Phosphoribosylaminoimidazole-succinocarboxamide synthase (236 aa).

It belongs to the SAICAR synthetase family.

It catalyses the reaction 5-amino-1-(5-phospho-D-ribosyl)imidazole-4-carboxylate + L-aspartate + ATP = (2S)-2-[5-amino-1-(5-phospho-beta-D-ribosyl)imidazole-4-carboxamido]succinate + ADP + phosphate + 2 H(+). The protein operates within purine metabolism; IMP biosynthesis via de novo pathway; 5-amino-1-(5-phospho-D-ribosyl)imidazole-4-carboxamide from 5-amino-1-(5-phospho-D-ribosyl)imidazole-4-carboxylate: step 1/2. The polypeptide is Phosphoribosylaminoimidazole-succinocarboxamide synthase (Pseudomonas putida (strain GB-1)).